Here is a 188-residue protein sequence, read N- to C-terminus: dCTP deaminase (188 aa).

A dCTP-binding site is contributed by Lys-109–Arg-114. The Proton donor/acceptor role is filled by Glu-135. Residues Gln-154, Tyr-168, and Gln-178 each coordinate dCTP.

This sequence belongs to the dCTP deaminase family. Homotrimer.

It carries out the reaction dCTP + H2O + H(+) = dUTP + NH4(+). It participates in pyrimidine metabolism; dUMP biosynthesis; dUMP from dCTP (dUTP route): step 1/2. Functionally, catalyzes the deamination of dCTP to dUTP. The sequence is that of dCTP deaminase from Helicobacter pylori (strain J99 / ATCC 700824) (Campylobacter pylori J99).